A 250-amino-acid chain; its full sequence is 2,3-bisphosphoglycerate-dependent phosphoglycerate mutase (250 aa).

Substrate-binding positions include 10–17, 23–24, Arg62, 89–92, Lys100, 116–117, and 185–186; these read RHGESQWN, TG, ERHY, RR, and GN. Catalysis depends on His11, which acts as the Tele-phosphohistidine intermediate. Glu89 acts as the Proton donor/acceptor in catalysis.

Belongs to the phosphoglycerate mutase family. BPG-dependent PGAM subfamily. Homodimer.

The enzyme catalyses (2R)-2-phosphoglycerate = (2R)-3-phosphoglycerate. It functions in the pathway carbohydrate degradation; glycolysis; pyruvate from D-glyceraldehyde 3-phosphate: step 3/5. Its function is as follows. Catalyzes the interconversion of 2-phosphoglycerate and 3-phosphoglycerate. In Sodalis glossinidius (strain morsitans), this protein is 2,3-bisphosphoglycerate-dependent phosphoglycerate mutase.